We begin with the raw amino-acid sequence, 1959 residues long: Myosin-9 (1959 aa).

The region spanning 27–77 is the Myosin N-terminal SH3-like domain; the sequence is AAKKLVWVPSEKSGFEAASLKEEVGDEAIVELAENGKKVKVNKDDIQKMNP. One can recognise a Myosin motor domain in the interval 81–776; that stretch reads SKVEDMAELT…VLAHLEEERD (696 aa). Position 174-181 (174-181) interacts with ATP; sequence GESGAGKT. The interval 654–676 is actin-binding; the sequence is LAKLMATLRNTNPNFVRCIIPNH. Positions 779–808 constitute an IQ domain; sequence ITDVIIGFQACCRGYLARKAFAKRQQQLTA. Residues 837 to 1925 are a coiled coil; it reads LLQVSRQEEE…LKSKLRRGDL (1089 aa). Disordered stretches follow at residues 1118–1168, 1694–1717, 1879–1917, and 1936–1959; these read EDLE…REQE, RAKRQAQQERDELADEIANSSGKG, LEEAEEEAQRANVRRKLQRELDDATETADAMNREVSSLK, and KGTGECSDEEVDGKAEAGDAKATE. Composition is skewed to basic and acidic residues over residues 1122–1148 and 1694–1704; these read SERASRNKAEKQKRDLGEELEALKTEL and RAKRQAQQERD. The span at 1947-1959 shows a compositional bias: basic and acidic residues; that stretch reads DGKAEAGDAKATE.

This sequence belongs to the TRAFAC class myosin-kinesin ATPase superfamily. Myosin family. In terms of assembly, myosin is a hexameric protein that consists of 2 heavy chain subunits (MHC), 2 alkali light chain subunits (MLC) and 2 regulatory light chain subunits (MLC-2). As to expression, expressed in fibroblasts, brain, lung, kidney, spleen, and skeletal, cardiac and smooth muscles.

It localises to the cytoplasm. Its subcellular location is the cytoskeleton. The protein localises to the cell cortex. It is found in the cytoplasmic vesicle. The protein resides in the secretory vesicle. It localises to the cortical granule. Functionally, cellular myosin that appears to play a role in cytokinesis, cell shape, and specialized functions such as secretion and capping. This is Myosin-9 (MYH9) from Gallus gallus (Chicken).